A 505-amino-acid chain; its full sequence is Trans-cinnamate 4-monooxygenase (505 aa).

Residues 3–23 (LLLLEKTLLGLFIAAITAIAI) form a helical membrane-spanning segment. (E)-cinnamate is bound by residues 213 to 218 (RSRLAQ) and Ala-306. Cys-447 provides a ligand contact to heme.

The protein belongs to the cytochrome P450 family. Requires heme as cofactor.

The protein resides in the membrane. The catalysed reaction is (E)-cinnamate + reduced [NADPH--hemoprotein reductase] + O2 = (E)-4-coumarate + oxidized [NADPH--hemoprotein reductase] + H2O + H(+). The protein operates within phenylpropanoid metabolism; trans-4-coumarate biosynthesis; trans-4-coumarate from trans-cinnamate: step 1/1. Functionally, catalyzes the first oxidative step of the phenylpropanoid pathway in higher plants by transforming trans-cinnamate into p-coumarate. The compounds formed by this pathway are essential components for lignification, pollination, and defense against ultraviolet light, predators and pathogens. In Glycyrrhiza echinata (Licorice), this protein is Trans-cinnamate 4-monooxygenase (CYP73A14).